The primary structure comprises 205 residues: Thymidylate kinase (205 aa).

Residue 11–18 (GVEGSGKS) coordinates ATP.

Belongs to the thymidylate kinase family.

It catalyses the reaction dTMP + ATP = dTDP + ADP. Its function is as follows. Phosphorylation of dTMP to form dTDP in both de novo and salvage pathways of dTTP synthesis. The protein is Thymidylate kinase of Ruthia magnifica subsp. Calyptogena magnifica.